Reading from the N-terminus, the 254-residue chain is MVSWMISRAVVLVFGMLYPAYYSYKAVKTKNVKEYVRWMMYWIVFALYTVIETVADQTLAWFPLYYELKIAFVIWLLSPYTRGASLIYRKFLHPLLSSKEREIDDYIVQAKERGYETMVNFGRQGLNLAAAAAVTAAVKSQGAITERLRSFSMHDLTAIQGDEPVGHRPYQTLPEAKRKGKQATESPAYGIPLKDGSEQTDEEAEGPFSDDEMVTHKALRRSQSMKSVKTIKGRKEVRYGSLKYKVKKRPQVYF.

3 helical membrane passes run 1 to 21 (MVSW…YPAY), 35 to 55 (YVRW…ETVA), and 59 to 79 (LAWF…LLSP). The tract at residues 162–232 (DEPVGHRPYQ…QSMKSVKTIK (71 aa)) is disordered. Acidic residues predominate over residues 198-212 (EQTDEEAEGPFSDDE). A Phosphothreonine modification is found at Thr-200. A Phosphoserine modification is found at Ser-209.

Belongs to the DP1 family.

It localises to the endoplasmic reticulum membrane. In terms of biological role, microtubule-binding protein required to ensure proper cell division and nuclear envelope reassembly by sequestering the endoplasmic reticulum away from chromosomes during mitosis. Probably acts by clearing the endoplasmic reticulum membrane from metaphase chromosomes. This chain is Receptor expression-enhancing protein 3 (Reep3), found in Mus musculus (Mouse).